Reading from the N-terminus, the 753-residue chain is Ion-translocating oxidoreductase complex subunit C (753 aa).

2 4Fe-4S ferredoxin-type domains span residues 367–397 and 407–436; these read EMGE…QQLY and KATA…VQYF. 8 residues coordinate [4Fe-4S] cluster: Cys377, Cys380, Cys383, Cys387, Cys416, Cys419, Cys422, and Cys426. 4 disordered regions span residues 517–561, 606–625, 640–659, and 705–735; these read AKPD…RKAA, RKAE…PVDP, and AKAR…AVAA. Residues 526 to 537 are compositionally biased toward basic and acidic residues; it reads AAREARKAEARA. 3 stretches are compositionally biased toward low complexity: residues 610–622, 644–656, and 712–735; these read QQVA…VAEP and QQAA…AVAA.

Belongs to the 4Fe4S bacterial-type ferredoxin family. RnfC subfamily. In terms of assembly, the complex is composed of six subunits: RnfA, RnfB, RnfC, RnfD, RnfE and RnfG. [4Fe-4S] cluster serves as cofactor.

The protein resides in the cell inner membrane. Its function is as follows. Part of a membrane-bound complex that couples electron transfer with translocation of ions across the membrane. The protein is Ion-translocating oxidoreductase complex subunit C of Klebsiella pneumoniae (strain 342).